We begin with the raw amino-acid sequence, 253 residues long: Discoidin-1 subunit A (253 aa).

At Ser2 the chain carries N-acetylserine. Residues 2-152 enclose the F5/8 type C domain; that stretch reads STQGLVQLLA…ISLRCEFYTQ (151 aa). A Cell attachment site motif is present at residues 79 to 81; it reads RGD.

In terms of assembly, tetramer of four different chains (A to D). As to expression, stalk cells.

The protein resides in the cytoplasm. In terms of biological role, galactose- and N-acetylgalactosamine-binding lectin. May play a role in cell-substratum adhesion rather than in cell-cell adhesion. May be necessary for the maintenance of normal elongate morphology during aggregation. The chain is Discoidin-1 subunit A (dscA-1) from Dictyostelium discoideum (Social amoeba).